Here is a 246-residue protein sequence, read N- to C-terminus: Type III pantothenate kinase (246 aa).

6–13 (DVGNTHSV) provides a ligand contact to ATP. 103–106 (GADR) is a binding site for substrate. Aspartate 105 acts as the Proton acceptor in catalysis. A K(+)-binding site is contributed by aspartate 125. Residue threonine 128 participates in ATP binding. A substrate-binding site is contributed by threonine 179.

This sequence belongs to the type III pantothenate kinase family. Homodimer. The cofactor is NH4(+). Requires K(+) as cofactor.

The protein resides in the cytoplasm. The catalysed reaction is (R)-pantothenate + ATP = (R)-4'-phosphopantothenate + ADP + H(+). It functions in the pathway cofactor biosynthesis; coenzyme A biosynthesis; CoA from (R)-pantothenate: step 1/5. In terms of biological role, catalyzes the phosphorylation of pantothenate (Pan), the first step in CoA biosynthesis. This is Type III pantothenate kinase from Thermotoga sp. (strain RQ2).